The chain runs to 88 residues: Small ribosomal subunit protein uS17 (88 aa).

The protein belongs to the universal ribosomal protein uS17 family. In terms of assembly, part of the 30S ribosomal subunit.

One of the primary rRNA binding proteins, it binds specifically to the 5'-end of 16S ribosomal RNA. This chain is Small ribosomal subunit protein uS17, found in Marinobacter nauticus (strain ATCC 700491 / DSM 11845 / VT8) (Marinobacter aquaeolei).